We begin with the raw amino-acid sequence, 481 residues long: Putative cytochrome P450 520B1 (481 aa).

C427 is a heme binding site.

Belongs to the cytochrome P450 family. Heme serves as cofactor.

The chain is Putative cytochrome P450 520B1 (cyp520B1) from Dictyostelium discoideum (Social amoeba).